A 149-amino-acid polypeptide reads, in one-letter code: Pleckstrin homology domain-containing family J member 1 (149 aa).

Residues 15-108 (PAEKAAEILM…WIEALKRASY (94 aa)) form the PH domain.

The protein is Pleckstrin homology domain-containing family J member 1 (PLEKHJ1) of Gallus gallus (Chicken).